A 479-amino-acid chain; its full sequence is MGKNLSLRQDDAQHALSANTSSAYNSVYDFLRYHDRGDGLTVNGKTSYSIDQAAAQITRENVSWNGTNVFGKSANLTFKFLQSVSSIPSGDTGFVKFNAEQIEQAKLSLQSWSDVANLTFTEVTGNKSANITFGNYTRDASGNLDYGTQAYAYYPGNYQGAGSSWYNYNQSNIRNPGSEEYGRQTFTHEIGHALGLAHPGEYNAGEGDPSYNDAVYAEDSYQFSIMSYWGENETGADYNGHYGGAPMIDDIAAIQRLYGANMTTRTGDSVYGFNSNTDRDFYTATDSSKALIFSVWDAGGTDTFDFSGYSNNQRINLNEGSFSDVGGLKGNVSIAHGVTIENAIGGSGNDILVGNSADNILQGGAGNDVLYGGAGADTLYGGAGRDTFVYGSGQDSTVAAYDWIADFQKGIDKIDLSAFRNEGQLSFVQDQFTGKGQEVMLQWDAANSITNLWLHEAGHSSVDFLVRIVGQAAQSDIIV.

Residues 1-17 (MGKNLSLRQDDAQHALS) constitute a propeptide that is removed on maturation. His-188 is a binding site for Zn(2+). The active site involves Glu-189. Residues His-192 and Tyr-228 each contribute to the Zn(2+) site. Positions 265, 267, 297, 299, 300, 302, 339, 341, 346, 348, 350, 355, 357, 359, 363, 364, 365, 366, 368, 372, 373, 375, 377, 381, 382, 383, 384, 386, 395, 402, and 412 each coordinate Ca(2+). Hemolysin-type calcium-binding repeat units follow at residues 344-361 (IGGS…DNIL), 362-379 (QGGA…ADTL), and 380-397 (YGGA…QDST).

The protein belongs to the peptidase M10B family. Ca(2+) is required as a cofactor. Requires Zn(2+) as cofactor.

The protein resides in the secreted. It carries out the reaction Preferential cleavage of bonds with hydrophobic residues in P1'.. The sequence is that of Serralysin C (prtC) from Dickeya chrysanthemi (Pectobacterium chrysanthemi).